A 112-amino-acid chain; its full sequence is Cell cycle protein GpsB (112 aa).

Residues 38-72 are a coiled coil; that stretch reads IKDYEAFHKEFEQLKQQNARLKRELEEQKLAATQV.

It belongs to the GpsB family. In terms of assembly, forms polymers through the coiled coil domains. Interacts with PBP1, MreC and EzrA.

The protein resides in the cytoplasm. Its function is as follows. Divisome component that associates with the complex late in its assembly, after the Z-ring is formed, and is dependent on DivIC and PBP2B for its recruitment to the divisome. Together with EzrA, is a key component of the system that regulates PBP1 localization during cell cycle progression. Its main role could be the removal of PBP1 from the cell pole after pole maturation is completed. Also contributes to the recruitment of PBP1 to the division complex. Not essential for septum formation. The protein is Cell cycle protein GpsB of Bacillus anthracis (strain A0248).